A 66-amino-acid chain; its full sequence is Nigrocin-2ISb (66 aa).

An N-terminal signal peptide occupies residues 1 to 22 (MFTLKKSMLLLFFLGTINLSLC). Residues 23–43 (QEERDAEEERRDEDNAKMEEI) constitute a propeptide, removed in mature form. Cysteine 60 and cysteine 66 are disulfide-bonded.

In terms of tissue distribution, expressed by the skin glands.

The protein resides in the secreted. Its function is as follows. Has antimicrobial activity against Gram-negative bacterium E.coli ATCC 8739 (MIC=50 ug), against Gram positive bacteria S.aureus ATCC 6538 (MIC=3.1 ug), methicillin-resistant S.aureus ATCC 43300 (MIC=12.5 ug), B.subtilis ATCC 6633 (MIC=12.5 ug) and against fungus C.albicans ATCC 90028 (MIC=50 ug). The polypeptide is Nigrocin-2ISb (Odorrana ishikawae (Ishikawa's frog)).